Reading from the N-terminus, the 447-residue chain is tRNA-2-methylthio-N(6)-dimethylallyladenosine synthase (447 aa).

Positions 10–128 (KLFCISTYGC…FPEYLHRVLQ (119 aa)) constitute an MTTase N-terminal domain. Positions 19, 55, 89, 165, 169, and 172 each coordinate [4Fe-4S] cluster. A Radical SAM core domain is found at 151-382 (RKSDVKAFVT…EAINKKVVIK (232 aa)). Residues 384–447 (KEYEGKVVEV…PFSLIGEIVE (64 aa)) form the TRAM domain.

It belongs to the methylthiotransferase family. MiaB subfamily. In terms of assembly, monomer. The cofactor is [4Fe-4S] cluster.

Its subcellular location is the cytoplasm. The enzyme catalyses N(6)-dimethylallyladenosine(37) in tRNA + (sulfur carrier)-SH + AH2 + 2 S-adenosyl-L-methionine = 2-methylsulfanyl-N(6)-dimethylallyladenosine(37) in tRNA + (sulfur carrier)-H + 5'-deoxyadenosine + L-methionine + A + S-adenosyl-L-homocysteine + 2 H(+). Functionally, catalyzes the methylthiolation of N6-(dimethylallyl)adenosine (i(6)A), leading to the formation of 2-methylthio-N6-(dimethylallyl)adenosine (ms(2)i(6)A) at position 37 in tRNAs that read codons beginning with uridine. The chain is tRNA-2-methylthio-N(6)-dimethylallyladenosine synthase from Clostridium perfringens (strain SM101 / Type A).